Here is a 289-residue protein sequence, read N- to C-terminus: MTETTDSVPEPPSDADQLQPKVSICGLDMPAEVSETAAEAAIGVSEPKKRSALWEFAILAVIAIGLYYVMLTFVARPYLIPSESMEPTLHGCSGCVGDRIMVDKITYRFSSPQPGDVIVFKGPPSWNTMYKSIRSNNIVLRSVQNALSFVGFVPPDENDLVKRVIAVGGQTVQCRSDTGLTVNGKPLKEPYLRPVTMNADLSFSPCLGSEFGPVTVPQGRLWVMGDNRIHSADSRYHCNSTDVVNGLSCTGDPNSGTVPVSNVIGKARVVVWPPSRWGGVGSVNSQQGQ.

Residues Met1–Leu53 lie on the Cytoplasmic side of the membrane. Residues Trp54–Val74 form a helical membrane-spanning segment. The Extracellular portion of the chain corresponds to Ala75–Gln289. Residues Ser84 and Lys162 contribute to the active site.

It belongs to the peptidase S26 family.

It localises to the cell membrane. The enzyme catalyses Cleavage of hydrophobic, N-terminal signal or leader sequences from secreted and periplasmic proteins.. This is Probable signal peptidase I (lepB) from Mycobacterium leprae (strain TN).